Here is a 336-residue protein sequence, read N- to C-terminus: MSIMDERLLSGESAYEDADLEYSLRPQTLRQYIGQDKAKHNLEVFIEAAKMREETLDHVLLYGPPGLGKTTLANIIANEMGVNVRTTSGPAIERPGDLAAVLTSLQPGDVLFIDEIHRLHRSIEEVLYPAMEDFCLDIVIGKGPSARSVRLDLPPFTLVGATTRAGALSAPLRDRFGVLSRLEYYTVDQLSAIVERTAEVFEVEIDSLAALEIARRARGTPRIANRLLRRVRDFAQVRGNGTVTMEITQMALELLQVDKLGLDHIDHKLLLGIIEKFRGGPVGLETVSATIGEESHTIEDVYEPYLLQIGFLQRTPRGRIVTPLAYEHFGMEMPKV.

Residues 4–185 (MDERLLSGES…FGVLSRLEYY (182 aa)) are large ATPase domain (RuvB-L). ATP-binding positions include leucine 24, arginine 25, glycine 66, lysine 69, threonine 70, threonine 71, 132–134 (EDF), arginine 175, tyrosine 185, and arginine 222. A Mg(2+)-binding site is contributed by threonine 70. Positions 186–256 (TVDQLSAIVE…ITQMALELLQ (71 aa)) are small ATPAse domain (RuvB-S). The head domain (RuvB-H) stretch occupies residues 259–336 (KLGLDHIDHK…EHFGMEMPKV (78 aa)). Residues arginine 314 and arginine 319 each contribute to the DNA site.

Belongs to the RuvB family. Homohexamer. Forms an RuvA(8)-RuvB(12)-Holliday junction (HJ) complex. HJ DNA is sandwiched between 2 RuvA tetramers; dsDNA enters through RuvA and exits via RuvB. An RuvB hexamer assembles on each DNA strand where it exits the tetramer. Each RuvB hexamer is contacted by two RuvA subunits (via domain III) on 2 adjacent RuvB subunits; this complex drives branch migration. In the full resolvosome a probable DNA-RuvA(4)-RuvB(12)-RuvC(2) complex forms which resolves the HJ.

It localises to the cytoplasm. It catalyses the reaction ATP + H2O = ADP + phosphate + H(+). Functionally, the RuvA-RuvB-RuvC complex processes Holliday junction (HJ) DNA during genetic recombination and DNA repair, while the RuvA-RuvB complex plays an important role in the rescue of blocked DNA replication forks via replication fork reversal (RFR). RuvA specifically binds to HJ cruciform DNA, conferring on it an open structure. The RuvB hexamer acts as an ATP-dependent pump, pulling dsDNA into and through the RuvAB complex. RuvB forms 2 homohexamers on either side of HJ DNA bound by 1 or 2 RuvA tetramers; 4 subunits per hexamer contact DNA at a time. Coordinated motions by a converter formed by DNA-disengaged RuvB subunits stimulates ATP hydrolysis and nucleotide exchange. Immobilization of the converter enables RuvB to convert the ATP-contained energy into a lever motion, pulling 2 nucleotides of DNA out of the RuvA tetramer per ATP hydrolyzed, thus driving DNA branch migration. The RuvB motors rotate together with the DNA substrate, which together with the progressing nucleotide cycle form the mechanistic basis for DNA recombination by continuous HJ branch migration. Branch migration allows RuvC to scan DNA until it finds its consensus sequence, where it cleaves and resolves cruciform DNA. This is Holliday junction branch migration complex subunit RuvB from Bacillus cereus (strain ZK / E33L).